We begin with the raw amino-acid sequence, 102 residues long: Large ribosomal subunit protein uL24 (102 aa).

Belongs to the universal ribosomal protein uL24 family. Part of the 50S ribosomal subunit.

Its function is as follows. One of two assembly initiator proteins, it binds directly to the 5'-end of the 23S rRNA, where it nucleates assembly of the 50S subunit. Functionally, one of the proteins that surrounds the polypeptide exit tunnel on the outside of the subunit. In Cupriavidus necator (strain ATCC 17699 / DSM 428 / KCTC 22496 / NCIMB 10442 / H16 / Stanier 337) (Ralstonia eutropha), this protein is Large ribosomal subunit protein uL24.